A 66-amino-acid chain; its full sequence is MAKMKTKSAAAKRFSVTGAGKVKFKKMNLRHILTKKAPKRKRKLRHAGFLSKVELKVVKRKLLPYA.

This sequence belongs to the bacterial ribosomal protein bL35 family.

The protein is Large ribosomal subunit protein bL35 of Treponema pallidum (strain Nichols).